Consider the following 392-residue polypeptide: WD repeat-containing protein GTS1 (392 aa).

WD repeat units lie at residues 81 to 124 (GHSD…QVSR), 128 to 167 (GNDQEIFSFSYGGAADNLLAGGCKEQVLLWDWRNSKQVAC), 171 to 211 (SHMD…NDDD), and 323 to 368 (GHID…TEIN).

Expressed in germinating seeds, rosettes leaves, flowers and siliques.

Involved in the control of plant growth development. Acts as negative regulator of seed germination, cell division in meristematic regions, plant growth and overall biomass accumulation. May function by regulating ribosome activities and biogenesis in plant cells. The polypeptide is WD repeat-containing protein GTS1 (Arabidopsis thaliana (Mouse-ear cress)).